Reading from the N-terminus, the 376-residue chain is Arginine/serine-rich coiled-coil protein 2 (376 aa).

Residues 1 to 171 (MIRTNFLLKQ…PSPPPFRGRN (171 aa)) are disordered. The segment covering 13–52 (RHESKDKSSKRHKSEEHNDKEHSSDKGRERLNSSENGEDR) has biased composition (basic and acidic residues). Ser-45 is modified (phosphoserine). Basic residues predominate over residues 53–155 (HKRKERKSSR…KRIEKPRRFS (103 aa)). A coiled-coil region spans residues 171–214 (NTAMDAQEALARRLERAKKLQEQREKEMVEKQKQQEMAAAAAAT). Lys-317 is covalently cross-linked (Glycyl lysine isopeptide (Lys-Gly) (interchain with G-Cter in SUMO1); alternate). Residue Lys-317 forms a Glycyl lysine isopeptide (Lys-Gly) (interchain with G-Cter in SUMO2); alternate linkage. Ser-318 carries the phosphoserine modification.

This sequence belongs to the RSRC2 family.

In Mus musculus (Mouse), this protein is Arginine/serine-rich coiled-coil protein 2 (Rsrc2).